The following is a 130-amino-acid chain: Protein YchQ (130 aa).

Over 1–9 (MTSFSTLLS) the chain is Periplasmic. Residues 10 to 28 (VHLISIALSVGLLTLRFWL) form a helical membrane-spanning segment. The Cytoplasmic segment spans residues 29–39 (RYQKHPQAFAR). The chain crosses the membrane as a helical span at residues 40–59 (WTRIVPPVVDTLLLLSGIAL). At 60–73 (MAKAHILPFSGQAQ) the chain is on the periplasmic side. Residues 74–93 (WLTEKLFGVIIYIVLGFIAL) traverse the membrane as a helical segment. Residues 94-104 (DYRRMHSQQAR) lie on the Cytoplasmic side of the membrane. A helical transmembrane segment spans residues 105–124 (IIAFPLALVVLYIIIKLATT). Over 125–130 (KVPLLG) the chain is Periplasmic.

The protein belongs to the SirB2 family.

The protein resides in the cell inner membrane. The chain is Protein YchQ (ychQ) from Escherichia coli (strain K12).